Consider the following 136-residue polypeptide: Small ribosomal subunit protein bS6 (136 aa).

Positions 99–136 (QSEMLKAEENRSERRERRERPEHGGHEGLDGDSDKADE) are disordered. Basic and acidic residues predominate over residues 103–136 (LKAEENRSERRERRERPEHGGHEGLDGDSDKADE).

This sequence belongs to the bacterial ribosomal protein bS6 family.

Its function is as follows. Binds together with bS18 to 16S ribosomal RNA. This chain is Small ribosomal subunit protein bS6, found in Azotobacter vinelandii (strain DJ / ATCC BAA-1303).